Here is a 173-residue protein sequence, read N- to C-terminus: MKFSQILVLAAIAVAAISAQDAAPATTPDTATATTPAAATTTTTTTTPAADAGTASTEQTTTAGPEAAGATNGTTTTPPADGTQTATAPLDATATEESSASGEMTPTVGTDTSDQVSDSTAAGPSTPEGSMTGTSTPKASDSSSSATDTTSGASHTTMAVACATVMTVGAYFL.

The span at 22–89 (AAPATTPDTA…ADGTQTATAP (68 aa)) shows a compositional bias: low complexity. Positions 22-155 (AAPATTPDTA…ATDTTSGASH (134 aa)) are disordered. Residues 95 to 133 (TEESSASGEMTPTVGTDTSDQVSDSTAAGPSTPEGSMTG) are compositionally biased toward polar residues. The segment covering 134–155 (TSTPKASDSSSSATDTTSGASH) has biased composition (low complexity).

As to expression, germinating spores.

Its function is as follows. Could be a structural protein required for the infection process of B.lactucae. This Bremia lactucae (Lettuce downy mildew) protein is HAM34 protein (HAM34).